A 199-amino-acid chain; its full sequence is uncharacterized protein (199 aa).

The G-patch domain maps to 112–160; that stretch reads PKSLGYRVLSQYGWSPQGDTAGLGLENQGRRAPVRAFRVKNDTIGLGTK.

This is an uncharacterized protein from Schizosaccharomyces pombe (strain 972 / ATCC 24843) (Fission yeast).